Reading from the N-terminus, the 113-residue chain is Putative increased recombination centers protein 14 (113 aa).

The chain is Putative increased recombination centers protein 14 (IRC14) from Saccharomyces cerevisiae (strain ATCC 204508 / S288c) (Baker's yeast).